The sequence spans 567 residues: Diacylglycerol kinase epsilon (567 aa).

The helical transmembrane segment at 22–42 (LILWTLCSVLLPVFITFWCSL) threads the bilayer. 2 Phorbol-ester/DAG-type zinc fingers span residues 59-108 (KHGW…RFQC) and 124-177 (PHHW…NEKC). The DAGKc domain maps to 215–356 (KQWTPLIILA…LDRWKVQVTN (142 aa)).

This sequence belongs to the eukaryotic diacylglycerol kinase family. In terms of tissue distribution, expressed predominantly in testis. Expressed in endothelium, platelets and podocytes (at protein level).

It localises to the membrane. Its subcellular location is the cytoplasm. It carries out the reaction a 1,2-diacyl-sn-glycerol + ATP = a 1,2-diacyl-sn-glycero-3-phosphate + ADP + H(+). The catalysed reaction is 1-hexadecanoyl-2-(5Z,8Z,11Z,14Z-eicosatetraenoyl)-sn-glycerol + ATP = 1-hexadecanoyl-2-(5Z,8Z,11Z,14Z-eicosatetraenoyl)-sn-glycero-3-phosphate + ADP + H(+). The enzyme catalyses 1-octadecanoyl-2-(5Z,8Z,11Z,14Z-eicosatetraenoyl)-sn-glycerol + ATP = 1-octadecanoyl-2-(5Z,8Z,11Z,14Z-eicosatetraenoyl)-sn-glycero-3-phosphate + ADP + H(+). It catalyses the reaction 1-eicosanoyl-2-(5Z,8Z,11Z,14Z)-eicosatetraenoyl-sn-glycerol + ATP = 1-eicosanoyl-2-(5Z,8Z,11Z,14Z)-eicosatetraenoyl-sn-glycero-3-phosphate + ADP + H(+). It carries out the reaction 1,2-di-(5Z,8Z,11Z,14Z)-eicosatetraenoyl-sn-glycerol + ATP = 1,2-di-(5Z,8Z,11Z,14Z)-eicosatetraenoyl-sn-glycero-3-phosphate + ADP + H(+). The catalysed reaction is 1-octadecanoyl-2-(9Z,12Z)-octadecadienoyl-sn-glycerol + ATP = 1-octadecanoyl-2-(9Z,12Z-octadecadienoyl)-sn-glycero-3-phosphate + ADP + H(+). The enzyme catalyses 1,2-di-(9Z,12Z-octadecadienoyl)-sn-glycerol + ATP = 1,2-di-(9Z,12Z-octadecadienoyl)-sn-glycero-3-phosphate + ADP + H(+). It catalyses the reaction 1,2-di-(9Z-octadecenoyl)-sn-glycerol + ATP = 1,2-di-(9Z-octadecenoyl)-sn-glycero-3-phosphate + ADP + H(+). It functions in the pathway lipid metabolism; glycerolipid metabolism. With respect to regulation, undergoes competitive inhibition by its own product 1,2-diacyl-sn-glycero-3-phosphate/phosphatidic acid. The strongest inhibition being observed in vitro with 1-octadecanoyl-2-(5Z,8Z,11Z,14Z-eicosatetraenoyl)-sn-glycero-3-phosphate, a major intermediate in the phosphatidylinositol turnover cycle and more generally by diacylglycerols with an arachidonoyl acyl chain at the sn-2 position. Membrane-bound diacylglycerol kinase that converts diacylglycerol/DAG into phosphatidic acid/phosphatidate/PA and regulates the respective levels of these two bioactive lipids. Thereby, acts as a central switch between the signaling pathways activated by these second messengers with different cellular targets and opposite effects in numerous biological processes. Also plays an important role in the biosynthesis of complex lipids. Displays specificity for diacylglycerol substrates with an arachidonoyl acyl chain at the sn-2 position, with the highest activity toward 1-octadecanoyl-2-(5Z,8Z,11Z,14Z-eicosatetraenoyl)-sn-glycerol the main diacylglycerol intermediate within the phosphatidylinositol turnover cycle. Can also phosphorylate diacylglycerol substrates with a linoleoyl acyl chain at the sn-2 position but much less efficiently. The protein is Diacylglycerol kinase epsilon (DGKE) of Homo sapiens (Human).